We begin with the raw amino-acid sequence, 159 residues long: Ribosomal RNA large subunit methyltransferase H (159 aa).

S-adenosyl-L-methionine contacts are provided by residues Leu76, Gly108, and 127–132 (FSRMTF).

The protein belongs to the RNA methyltransferase RlmH family. Homodimer.

The protein resides in the cytoplasm. The enzyme catalyses pseudouridine(1915) in 23S rRNA + S-adenosyl-L-methionine = N(3)-methylpseudouridine(1915) in 23S rRNA + S-adenosyl-L-homocysteine + H(+). Its function is as follows. Specifically methylates the pseudouridine at position 1915 (m3Psi1915) in 23S rRNA. The sequence is that of Ribosomal RNA large subunit methyltransferase H from Clostridioides difficile (strain 630) (Peptoclostridium difficile).